Here is a 125-residue protein sequence, read N- to C-terminus: Large ribosomal subunit protein bL12 (125 aa).

It belongs to the bacterial ribosomal protein bL12 family. Homodimer. Part of the ribosomal stalk of the 50S ribosomal subunit. Forms a multimeric L10(L12)X complex, where L10 forms an elongated spine to which 2 to 4 L12 dimers bind in a sequential fashion. Binds GTP-bound translation factors.

Its function is as follows. Forms part of the ribosomal stalk which helps the ribosome interact with GTP-bound translation factors. Is thus essential for accurate translation. The protein is Large ribosomal subunit protein bL12 of Azorhizobium caulinodans (strain ATCC 43989 / DSM 5975 / JCM 20966 / LMG 6465 / NBRC 14845 / NCIMB 13405 / ORS 571).